Consider the following 133-residue polypeptide: Large-conductance mechanosensitive channel (133 aa).

2 helical membrane passes run 14-34 (VVDLAVGVVIGAAFGKIVSSL) and 67-87 (GNFIQTIFDFLIIAAAIFMFV).

Belongs to the MscL family. Homopentamer.

Its subcellular location is the cell membrane. Channel that opens in response to stretch forces in the membrane lipid bilayer. May participate in the regulation of osmotic pressure changes within the cell. This Bacillus cereus (strain AH187) protein is Large-conductance mechanosensitive channel.